A 473-amino-acid chain; its full sequence is UDP-N-acetylmuramate--L-alanine ligase (473 aa).

115–121 provides a ligand contact to ATP; sequence GTHGKTT.

It belongs to the MurCDEF family.

It is found in the cytoplasm. It carries out the reaction UDP-N-acetyl-alpha-D-muramate + L-alanine + ATP = UDP-N-acetyl-alpha-D-muramoyl-L-alanine + ADP + phosphate + H(+). Its pathway is cell wall biogenesis; peptidoglycan biosynthesis. In terms of biological role, cell wall formation. The polypeptide is UDP-N-acetylmuramate--L-alanine ligase (Rhizorhabdus wittichii (strain DSM 6014 / CCUG 31198 / JCM 15750 / NBRC 105917 / EY 4224 / RW1) (Sphingomonas wittichii)).